Consider the following 474-residue polypeptide: MIHSNKVATVVLALISSWPADGTNNHGLKLQKAQAICKMSKELKATAMRAANDAKLKITEILELENVFAAMIPNATKGTEADGCTDYNAVFLEANNTAAETVSKIATLAESATKAAGAAGRAAGVLDEFIAALAQAQGATGLYCIQGSGTGAATHTELADCFNGDLKPRNMLSIRDPKVSAAATGSTDLTTLAKAMAASGTDTTFHGDQQSKGCGLMKGTSDGIMIGQALTGTFAWAQGLLRFGALGANGIASTGVTGYAHTATASGNGVHWASDPEKIPVIAEAIALVSNYNTLADSIGTRAKDAIEKVKKCMKATNKEIKREHIFLNVSHLNRELQKAVTELDKALNKQDAKAEAKQQPNCDDKKQIECGDTPGCGWHKAEGKCEAKDGEGQKNQATGEKDANKNRCTQHGTNKEACEKENTPGQSAVCGFRKGKDGETDEPDKEKCRNGSFLTSKQFAFSVVSAAFMALLF.

The first 22 residues, 1 to 22 (MIHSNKVATVVLALISSWPADG), serve as a signal peptide directing secretion. Cystine bridges form between Cys-37-Cys-161 and Cys-144-Cys-214. Residues Asn-74 and Asn-95 are each glycosylated (N-linked (GlcNAc...) asparagine). Residue Asn-329 is glycosylated (N-linked (GlcNAc...) asparagine). The disordered stretch occupies residues 388-449 (AKDGEGQKNQ…ETDEPDKEKC (62 aa)). 2 stretches are compositionally biased toward basic and acidic residues: residues 414 to 423 (TNKEACEKEN) and 435 to 449 (KGKD…KEKC). A lipid anchor (GPI-anchor amidated asparagine) is attached at Asn-451. Residues 452–474 (GSFLTSKQFAFSVVSAAFMALLF) constitute a propeptide, removed in mature form.

It localises to the cell membrane. Functionally, VSG forms a coat on the surface of the parasite. The trypanosome evades the immune response of the host by expressing a series of antigenically distinct VSGs from an estimated 1000 VSG genes. In Trypanosoma brucei brucei, this protein is Variant surface glycoprotein MITAT 1.5.